A 154-amino-acid chain; its full sequence is Ribosomal RNA large subunit methyltransferase H (154 aa).

S-adenosyl-L-methionine-binding positions include leucine 70, glycine 102, and 121 to 126 (LSRMTL).

It belongs to the RNA methyltransferase RlmH family. As to quaternary structure, homodimer.

Its subcellular location is the cytoplasm. It carries out the reaction pseudouridine(1915) in 23S rRNA + S-adenosyl-L-methionine = N(3)-methylpseudouridine(1915) in 23S rRNA + S-adenosyl-L-homocysteine + H(+). In terms of biological role, specifically methylates the pseudouridine at position 1915 (m3Psi1915) in 23S rRNA. The protein is Ribosomal RNA large subunit methyltransferase H of Citrifermentans bemidjiense (strain ATCC BAA-1014 / DSM 16622 / JCM 12645 / Bem) (Geobacter bemidjiensis).